Consider the following 364-residue polypeptide: 4-hydroxythreonine-4-phosphate dehydrogenase (364 aa).

His148 and Thr149 together coordinate substrate. His177, His216, and His301 together coordinate a divalent metal cation. Substrate-binding residues include Lys309, Asn318, and Arg327.

The protein belongs to the PdxA family. In terms of assembly, homodimer. Zn(2+) serves as cofactor. It depends on Mg(2+) as a cofactor. Co(2+) is required as a cofactor.

It is found in the cytoplasm. The enzyme catalyses 4-(phosphooxy)-L-threonine + NAD(+) = 3-amino-2-oxopropyl phosphate + CO2 + NADH. Its pathway is cofactor biosynthesis; pyridoxine 5'-phosphate biosynthesis; pyridoxine 5'-phosphate from D-erythrose 4-phosphate: step 4/5. Its function is as follows. Catalyzes the NAD(P)-dependent oxidation of 4-(phosphooxy)-L-threonine (HTP) into 2-amino-3-oxo-4-(phosphooxy)butyric acid which spontaneously decarboxylates to form 3-amino-2-oxopropyl phosphate (AHAP). This Campylobacter jejuni subsp. jejuni serotype O:2 (strain ATCC 700819 / NCTC 11168) protein is 4-hydroxythreonine-4-phosphate dehydrogenase.